Here is a 620-residue protein sequence, read N- to C-terminus: Glutathione-regulated potassium-efflux system protein KefC (620 aa).

The Periplasmic portion of the chain corresponds to 1–3 (MDS). A helical transmembrane segment spans residues 4-24 (HTLVQALIYLGSAALIVPIAV). Residue arginine 25 is a topological domain, cytoplasmic. The chain crosses the membrane as a helical span at residues 26–46 (LGLGSVLGYLIAGCIIGPWGL). Residues 47–53 (RLVTDAE) are Periplasmic-facing. Residues 54–74 (SILHFAEIGVVLMLFIIGLEL) form a helical membrane-spanning segment. Residues 75 to 89 (DPQRLWKLRAAVFGG) are Cytoplasmic-facing. A helical membrane pass occupies residues 90–110 (GALQMVICGGLLGLFCMLLGL). Over 111-113 (RWQ) the chain is Periplasmic. The helical transmembrane segment at 114–134 (VAELIGMTLALSSTAIAMQAM) threads the bilayer. At 135-148 (NERNLMVTQMGRSA) the chain is on the cytoplasmic side. A helical transmembrane segment spans residues 149–169 (FAVLLFQDIAAIPLVAMIPLL). Over 170–177 (AASSASTT) the chain is Periplasmic. The chain crosses the membrane as a helical span at residues 178-198 (MGAFALSALKVAGALVLVVLL). Residues 199 to 213 (GRYVTRPALRFVARS) are Cytoplasmic-facing. A helical transmembrane segment spans residues 214-233 (GLREVFSAVALFLVFGFGLL). At 234–236 (LEE) the chain is on the periplasmic side. A helical membrane pass occupies residues 237 to 254 (VGLSMAMGAFLAGVLLAS). At 255-269 (SEYRHALESDIEPFK) the chain is on the cytoplasmic side. A helical membrane pass occupies residues 270–290 (GLLLGLFFIGVGMSIDFGTLI). The Periplasmic segment spans residues 291 to 293 (ENP). A helical transmembrane segment spans residues 294-314 (LRIVILLLGFLIIKIAMLWLI). Residues 315 to 326 (ARPLQVPNKQRR) are Cytoplasmic-facing. The helical transmembrane segment at 327 to 347 (WFAVLLGQGSEFAFVVFGAAQ) threads the bilayer. The Periplasmic segment spans residues 348-358 (MANVLEPEWAK). Residues 359–379 (SLTLAVALSMAATPILLVILN) form a helical membrane-spanning segment. Topologically, residues 380–620 (RLEQSSTEEA…ADEPETKPSS (241 aa)) are cytoplasmic. In terms of domain architecture, RCK N-terminal spans 399 to 518 (QPRVIIAGFG…AGVEKPERET (120 aa)). The tract at residues 597–620 (GWQGTEEGKHTGNMADEPETKPSS) is disordered.

This sequence belongs to the monovalent cation:proton antiporter 2 (CPA2) transporter (TC 2.A.37) family. KefC subfamily. In terms of assembly, homodimer. Interacts with the regulatory subunit KefF.

It localises to the cell inner membrane. In terms of biological role, pore-forming subunit of a potassium efflux system that confers protection against electrophiles. Catalyzes K(+)/H(+) antiport. The sequence is that of Glutathione-regulated potassium-efflux system protein KefC from Shigella flexneri.